An 86-amino-acid chain; its full sequence is Probable weak neurotoxin NNAM2 (86 aa).

A signal peptide spans 1 to 21; sequence MKTLLLTLVVVTIVCLDLGYT. Cystine bridges form between Cys24/Cys45, Cys27/Cys32, Cys38/Cys63, Cys67/Cys78, and Cys79/Cys84.

It belongs to the three-finger toxin family. Ancestral subfamily. Orphan group II sub-subfamily. In terms of tissue distribution, expressed by the venom gland.

Its subcellular location is the secreted. In terms of biological role, binds with low affinity to muscular (alpha-1-beta-1-delta-epsilon/CHRNA1-CHRNB1-CHRND-CHRNE) and very low affinity to neuronal (alpha-7/CHRNA7) nicotinic acetylcholine receptor (nAChR). In Naja atra (Chinese cobra), this protein is Probable weak neurotoxin NNAM2.